Consider the following 202-residue polypeptide: Histone chaperone ASF1B (202 aa).

The tract at residues 1-155 is interaction with CHAF1B; it reads MAKVSVLNVA…VTRFHINWDN (155 aa). The segment at 1 to 156 is interaction with histone H3; sequence MAKVSVLNVA…TRFHINWDNN (156 aa). Serine 198 carries the post-translational modification Phosphoserine; by TLK2.

The protein belongs to the ASF1 family. Interacts with histone H3 (via C-terminus), including histone H3.1, H3.2 and H3.3, and histone H4; the interaction with H3 is direct. Interacts with the CHAF1A, CHAF1B and RBBP4 subunits of the CAF-1 complex. Interacts with HAT1, NASP and TAF1. Found in a soluble complex with NASP and histones H3 and H4; the interaction with NASP is probably indirect and mediated by H3-H4. Interacts with CDAN1. Found in a cytosolic complex with IPO4 and histones H3 and H4. Interacts with CREBBP. Post-translationally, phosphorylated by TLK1 and TLK2. In terms of tissue distribution, highly expressed in testis and at lower levels in colon, small intestine and thymus.

Its subcellular location is the nucleus. It localises to the cytoplasm. The protein localises to the cytosol. Functionally, histone chaperone that facilitates histone deposition and histone exchange and removal during nucleosome assembly and disassembly. Cooperates with chromatin assembly factor 1 (CAF-1) to promote replication-dependent chromatin assembly. Also involved in the nuclear import of the histone H3-H4 dimer together with importin-4 (IPO4): specifically recognizes and binds newly synthesized histones with the monomethylation of H3 'Lys-9' (H3K9me1) and diacetylation at 'Lys-5' and 'Lys-12' of H4 (H4K5K12ac) marks in the cytosol. Does not participate in replication-independent nucleosome deposition which is mediated by ASF1A and HIRA. Required for gonad development. The sequence is that of Histone chaperone ASF1B from Homo sapiens (Human).